The sequence spans 249 residues: Uridylate kinase (249 aa).

15–18 (KLSG) contacts ATP. The tract at residues 23-28 (GDEGFG) is involved in allosteric activation by GTP. Residue Gly-57 coordinates UMP. The ATP site is built by Gly-58 and Arg-62. UMP is bound by residues Asp-77 and 138–145 (TGNPFFTT). ATP contacts are provided by Thr-165, Tyr-171, and Asp-174.

The protein belongs to the UMP kinase family. As to quaternary structure, homohexamer.

It is found in the cytoplasm. It catalyses the reaction UMP + ATP = UDP + ADP. Its pathway is pyrimidine metabolism; CTP biosynthesis via de novo pathway; UDP from UMP (UMPK route): step 1/1. With respect to regulation, allosterically activated by GTP. Inhibited by UTP. Catalyzes the reversible phosphorylation of UMP to UDP. This Pseudoalteromonas translucida (strain TAC 125) protein is Uridylate kinase.